We begin with the raw amino-acid sequence, 431 residues long: Glutamate--tRNA ligase 1 (431 aa).

The 'HIGH' region motif lies at 6 to 16 (PSPTGDMHIGN). The 'KMSKS' region motif lies at 235-239 (KMSKR). ATP is bound at residue lysine 238.

It belongs to the class-I aminoacyl-tRNA synthetase family. Glutamate--tRNA ligase type 1 subfamily. As to quaternary structure, monomer.

The protein resides in the cytoplasm. The enzyme catalyses tRNA(Glu) + L-glutamate + ATP = L-glutamyl-tRNA(Glu) + AMP + diphosphate. Catalyzes the attachment of glutamate to tRNA(Glu) in a two-step reaction: glutamate is first activated by ATP to form Glu-AMP and then transferred to the acceptor end of tRNA(Glu). This is Glutamate--tRNA ligase 1 from Campylobacter jejuni subsp. jejuni serotype O:2 (strain ATCC 700819 / NCTC 11168).